The primary structure comprises 235 residues: Glycerol-3-phosphate acyltransferase (235 aa).

6 helical membrane-spanning segments follow: residues 4 to 24 (LLAILAVSYIIGSIPTSIMAG), 56 to 76 (SVTLIDIAKGVIAAVSVVAFF), 94 to 114 (LLAGMAAVIGHVFTVFAGFKG), 125 to 145 (LIGIAPVSMLIVIGIFLLTVW), 152 to 172 (VASILAAIAFPLIIAIRKYVF), and 191 to 211 (FHDSLDYHLMIFGLIVALAIL).

The protein belongs to the PlsY family. In terms of assembly, probably interacts with PlsX.

The protein localises to the cell inner membrane. It carries out the reaction an acyl phosphate + sn-glycerol 3-phosphate = a 1-acyl-sn-glycero-3-phosphate + phosphate. It functions in the pathway lipid metabolism; phospholipid metabolism. Its function is as follows. Catalyzes the transfer of an acyl group from acyl-phosphate (acyl-PO(4)) to glycerol-3-phosphate (G3P) to form lysophosphatidic acid (LPA). This enzyme utilizes acyl-phosphate as fatty acyl donor, but not acyl-CoA or acyl-ACP. The protein is Glycerol-3-phosphate acyltransferase of Chlorobium luteolum (strain DSM 273 / BCRC 81028 / 2530) (Pelodictyon luteolum).